The chain runs to 308 residues: Glutaminase (308 aa).

The substrate site is built by serine 66, asparagine 117, glutamate 161, asparagine 168, tyrosine 192, tyrosine 244, and valine 262.

Belongs to the glutaminase family. As to quaternary structure, homotetramer.

It catalyses the reaction L-glutamine + H2O = L-glutamate + NH4(+). This is Glutaminase from Klebsiella pneumoniae (strain 342).